The following is a 476-amino-acid chain: Adenosylhomocysteinase (476 aa).

Residues Thr-61, Asp-140, and Glu-200 each coordinate substrate. Residue Thr-201 to Thr-203 coordinates NAD(+). Lys-230 and Asp-234 together coordinate substrate. NAD(+) is bound by residues Asn-235, Gly-264–Gly-269, Glu-287, Asn-322, Ile-343–His-345, and Asn-389.

Belongs to the adenosylhomocysteinase family. Requires NAD(+) as cofactor.

The protein resides in the cytoplasm. It carries out the reaction S-adenosyl-L-homocysteine + H2O = L-homocysteine + adenosine. It functions in the pathway amino-acid biosynthesis; L-homocysteine biosynthesis; L-homocysteine from S-adenosyl-L-homocysteine: step 1/1. May play a key role in the regulation of the intracellular concentration of adenosylhomocysteine. The chain is Adenosylhomocysteinase from Acidovorax sp. (strain JS42).